A 689-amino-acid chain; its full sequence is Quinidine resistance protein 3 (689 aa).

A compositionally biased stretch (polar residues) spans 1–24; that stretch reads MQAQGSQSNVGSLRSNCSDNSLPN. The tract at residues 1–73 is disordered; sequence MQAQGSQSNV…DNQLSRLKSE (73 aa). Residues 1 to 108 are Extracellular-facing; the sequence is MQAQGSQSNV…RDYPPMMKKM (108 aa). Composition is skewed to basic and acidic residues over residues 29-51 and 59-73; these read MHCDESSGSPHSEHNDYSYEKTN and SREHRDNQLSRLKSE. Residues 109-131 form a helical membrane-spanning segment; that stretch reads IVFLIAFSSMMGPMGTSIIFPAI. Residues 132–139 are Cytoplasmic-facing; it reads NSITTEFK. Residues 140-163 traverse the membrane as a helical segment; the sequence is TSVIMVNVSIGVYLLSLGVFPLWW. The Extracellular portion of the chain corresponds to 164-175; sequence SSLSELEGRRTT. A helical transmembrane segment spans residues 176–193; it reads YITSFALLFAFNIGSALA. Over 194–235 the chain is Cytoplasmic; sequence PDINSFIALRMLCGAASASVQSVGAGTVADLYISEDRGKNLS. Residues 236–256 traverse the membrane as a helical segment; sequence YYYLGPLLAPLLSPIFGSLLV. Residues 257–265 are Extracellular-facing; sequence NRWPWRSTQ. Residues 266–283 traverse the membrane as a helical segment; the sequence is WFMVILSGCNVILLTVLL. The Cytoplasmic segment spans residues 284-475; sequence PETLRKQDSK…KSLHFLEYPP (192 aa). S436 carries the post-translational modification Phosphoserine. A helical membrane pass occupies residues 476-493; that stretch reads VALAITFSAISFSTVYFV. The Extracellular segment spans residues 494–510; the sequence is NMTVEYKYSRPPYNFKP. Residues 511–532 form a helical membrane-spanning segment; it reads LYIGLLYIPNSVTYFFASIYGG. The Cytoplasmic portion of the chain corresponds to 533–558; it reads RWVDMLLKRYKEKYGILAPEARISWN. A helical transmembrane segment spans residues 559–577; sequence VVTSVISFPIALLIFGWCL. At 578–586 the chain is on the extracellular side; it reads DKKCHWVTP. The chain crosses the membrane as a helical span at residues 587-609; the sequence is LIGTALFGYAAMMTIGATLSYLV. The Cytoplasmic portion of the chain corresponds to 610 to 624; it reads DSLPGKGATGVALNN. A helical transmembrane segment spans residues 625 to 642; it reads LIRQILAATAVFVTTPML. Over 643 to 648 the chain is Extracellular; that stretch reads NGMGTG. Residues 649–668 form a helical membrane-spanning segment; that stretch reads WAFTMLAFIVLGASSVLIIL. Residues 669–689 lie on the Cytoplasmic side of the membrane; it reads KKHGDYWRENYDLQKLYDKID.

The protein belongs to the major facilitator superfamily. CAR1 family.

It localises to the cell membrane. Functionally, multidrug resistance transporter involved in resistance and adaptation to quinidine and to the herbicide barban (4-chloro-2-butynyl [3-chlorophenyl] carbamate). This is Quinidine resistance protein 3 (QDR3) from Saccharomyces cerevisiae (strain ATCC 204508 / S288c) (Baker's yeast).